The chain runs to 652 residues: Sciellin (652 aa).

Residues 1–10 are compositionally biased toward basic residues; it reads MSNFSSRKKS. Disordered stretches follow at residues 1 to 29 and 43 to 180; these read MSNF…QQGF and SWIK…KPLG. Positions 66 to 95 are enriched in basic and acidic residues; it reads NSHDALDRKLIERDEPKATISRYRSEDMLD. Residue Lys-82 is modified to N6-acetyllysine. A compositionally biased stretch (polar residues) spans 97–110; it reads TLSSFRTPQSTKTP. Over residues 111–130 the composition is skewed to low complexity; it reads AVSSFNANTTATASTPATTP. A compositionally biased stretch (pro residues) spans 161–170; sequence LHPPLPPKPC. 15 consecutive repeat copies span residues 207 to 226, 227 to 241, 242 to 261, 262 to 281, 282 to 301, 302 to 320, 321 to 340, 341 to 360, 361 to 380, 381 to 398, 399 to 418, 419 to 438, 439 to 458, 459 to 477, and 478 to 496. The 15 X approximate tandem repeats stretch occupies residues 207-496; that stretch reads TEDLDDIIRV…VNSHVAEKNG (290 aa). Ser-264 bears the Phosphoserine mark. Ser-343 is modified (phosphoserine). The disordered stretch occupies residues 353 to 385; the sequence is EVNRSNKGGPSLDNFTKGVPARSRANQRDQDLD. The disordered stretch occupies residues 436 to 455; that stretch reads NQRNHDVDSTIRGNPTGTRC. The span at 446-455 shows a compositional bias: polar residues; sequence IRGNPTGTRC. The LIM zinc-binding domain occupies 583-649; that stretch reads DMCTYCRKPL…EPCYSKVMAK (67 aa).

Expressed in the upper layers of stratified epithelia, including, ependyma and choroid plexus of the brain ventricles.

The protein localises to the cytoplasm. Its subcellular location is the membrane. Functionally, may function in the assembly or regulation of proteins in the cornified envelope. The LIM domain may be involved in homotypic or heterotypic associations and may function to localize sciellin to the cornified envelope. This is Sciellin (Scel) from Mus musculus (Mouse).